A 305-amino-acid chain; its full sequence is Cytochrome c biogenesis protein CcsA (305 aa).

Transmembrane regions (helical) follow at residues 13 to 33 (IYFS…VYPV), 42 to 62 (KGII…WFYS), 70 to 90 (LYES…FIDI), 97 to 117 (WIGV…TLIL), 135 to 155 (WLIM…CGSL), 212 to 232 (YTIV…AVWA), 242 to 262 (WDPK…YIHI), and 276 to 296 (VASL…ILGI).

Belongs to the CcmF/CycK/Ccl1/NrfE/CcsA family. In terms of assembly, may interact with Ccs1.

The protein localises to the plastid. It localises to the chloroplast thylakoid membrane. Required during biogenesis of c-type cytochromes (cytochrome c6 and cytochrome f) at the step of heme attachment. The sequence is that of Cytochrome c biogenesis protein CcsA from Welwitschia mirabilis (Tree tumbo).